Reading from the N-terminus, the 148-residue chain is Large ribosomal subunit protein bL9 (148 aa).

It belongs to the bacterial ribosomal protein bL9 family.

Its function is as follows. Binds to the 23S rRNA. This chain is Large ribosomal subunit protein bL9, found in Staphylococcus haemolyticus (strain JCSC1435).